The chain runs to 58 residues: Large ribosomal subunit protein eL37 (58 aa).

Positions 20, 23, 35, and 38 each coordinate Zn(2+). Residues C20–C38 form a C4-type zinc finger.

This sequence belongs to the eukaryotic ribosomal protein eL37 family. It depends on Zn(2+) as a cofactor.

In terms of biological role, binds to the 23S rRNA. The sequence is that of Large ribosomal subunit protein eL37 from Haloquadratum walsbyi (strain DSM 16790 / HBSQ001).